The chain runs to 403 residues: Aspartate aminotransferase, cytoplasmic isozyme 2 (403 aa).

Met1 bears the N-acetylmethionine mark. Positions 37, 132, and 185 each coordinate L-aspartate. Residue Lys249 is modified to N6-(pyridoxal phosphate)lysine. Residue Arg377 participates in L-aspartate binding.

The protein belongs to the class-I pyridoxal-phosphate-dependent aminotransferase family. In terms of assembly, homodimer. Pyridoxal 5'-phosphate serves as cofactor.

It localises to the cytoplasm. The enzyme catalyses L-aspartate + 2-oxoglutarate = oxaloacetate + L-glutamate. In terms of biological role, important for the metabolism of amino acids and Krebs-cycle related organic acids. In plants, it is involved in nitrogen metabolism and in aspects of carbon and energy metabolism. In Arabidopsis thaliana (Mouse-ear cress), this protein is Aspartate aminotransferase, cytoplasmic isozyme 2 (ASP4).